Reading from the N-terminus, the 386-residue chain is Glucose-1-phosphate adenylyltransferase (386 aa).

Residues Y100, G165, 180–181, and S191 each bind alpha-D-glucose 1-phosphate; that span reads EK.

The protein belongs to the bacterial/plant glucose-1-phosphate adenylyltransferase family. In terms of assembly, homotetramer.

The catalysed reaction is alpha-D-glucose 1-phosphate + ATP + H(+) = ADP-alpha-D-glucose + diphosphate. The protein operates within glycan biosynthesis; glycogen biosynthesis. Its function is as follows. Involved in the biosynthesis of ADP-glucose, a building block required for the elongation reactions to produce glycogen. Catalyzes the reaction between ATP and alpha-D-glucose 1-phosphate (G1P) to produce pyrophosphate and ADP-Glc. The polypeptide is Glucose-1-phosphate adenylyltransferase (Clostridium beijerinckii (strain ATCC 51743 / NCIMB 8052) (Clostridium acetobutylicum)).